Consider the following 616-residue polypeptide: Probable Xaa-Pro aminopeptidase P (616 aa).

Mn(2+) contacts are provided by aspartate 413, aspartate 424, glutamate 522, and glutamate 536.

Belongs to the peptidase M24B family. The cofactor is Mn(2+).

It carries out the reaction Release of any N-terminal amino acid, including proline, that is linked to proline, even from a dipeptide or tripeptide.. Functionally, catalyzes the removal of a penultimate prolyl residue from the N-termini of peptides. The polypeptide is Probable Xaa-Pro aminopeptidase P (AMPP) (Paracoccidioides lutzii (strain ATCC MYA-826 / Pb01) (Paracoccidioides brasiliensis)).